A 129-amino-acid polypeptide reads, in one-letter code: Small ribosomal subunit protein uS11 (129 aa).

The protein belongs to the universal ribosomal protein uS11 family. As to quaternary structure, part of the 30S ribosomal subunit. Interacts with proteins S7 and S18. Binds to IF-3.

Functionally, located on the platform of the 30S subunit, it bridges several disparate RNA helices of the 16S rRNA. Forms part of the Shine-Dalgarno cleft in the 70S ribosome. This is Small ribosomal subunit protein uS11 from Rhodopseudomonas palustris (strain BisB5).